Here is a 240-residue protein sequence, read N- to C-terminus: Protein MGARP (240 aa).

Residues M1–G40 are Cytoplasmic-facing. The chain crosses the membrane as a helical; Anchor for type IV membrane protein span at residues S41–A63. At Y64 to G240 the chain is on the mitochondrial intermembrane side. Residues R166–G240 are disordered. Low complexity predominate over residues E170–N181. Positions D191–T201 are enriched in basic and acidic residues. Positions S202–S213 are enriched in acidic residues. The segment covering E228–G240 has biased composition (low complexity).

In terms of assembly, interacts with RHOT1/Miro-1, TRAK1/OIP106 and TRAK2/GRIF1. Interacts with RHOT2/Miro-2. Expressed in the brain, adrenal gland and corneal endothelium (CE). Expressed in steroid-producing cells of the ovary and testis (at protein level). Expressed in steroid-producing cells of the ovary and testis. Weakly expressed in placenta. Expressed in corneal endothelial cells.

It is found in the mitochondrion. It localises to the mitochondrion outer membrane. Its subcellular location is the mitochondrion inner membrane. Functionally, plays a role in the trafficking of mitochondria along microtubules. Regulates the kinesin-mediated axonal transport of mitochondria to nerve terminals along microtubules during hypoxia. Participates in the translocation of TRAK2/GRIF1 from the cytoplasm to the mitochondrion. Also plays a role in steroidogenesis through maintenance of mitochondrial abundance and morphology. Plays an inhibitory role during neocortex development by regulating mitochondrial morphology, distribution and motility in neocortical neurons. This chain is Protein MGARP (MGARP), found in Homo sapiens (Human).